The primary structure comprises 296 residues: Probable GTP 3',8-cyclase (296 aa).

One can recognise a Radical SAM core domain in the interval 5–230 (EYGRVVTNLR…HRRTQYFTPK (226 aa)). GTP is bound at residue arginine 14. Residues cysteine 21 and cysteine 25 each contribute to the [4Fe-4S] cluster site. Tyrosine 27 contributes to the S-adenosyl-L-methionine binding site. Cysteine 28 contacts [4Fe-4S] cluster. Lysine 61 serves as a coordination point for GTP. Glycine 65 contacts S-adenosyl-L-methionine. A GTP-binding site is contributed by threonine 89. An S-adenosyl-L-methionine-binding site is contributed by serine 113. Position 150 (lysine 150) interacts with GTP. Cysteine 245 and cysteine 248 together coordinate [4Fe-4S] cluster. 250–252 (RMR) is a GTP binding site. Cysteine 262 serves as a coordination point for [4Fe-4S] cluster.

It belongs to the radical SAM superfamily. MoaA family. Requires [4Fe-4S] cluster as cofactor.

The catalysed reaction is GTP + AH2 + S-adenosyl-L-methionine = (8S)-3',8-cyclo-7,8-dihydroguanosine 5'-triphosphate + 5'-deoxyadenosine + L-methionine + A + H(+). It participates in cofactor biosynthesis; molybdopterin biosynthesis. In terms of biological role, catalyzes the cyclization of GTP to (8S)-3',8-cyclo-7,8-dihydroguanosine 5'-triphosphate. The chain is Probable GTP 3',8-cyclase from Archaeoglobus fulgidus (strain ATCC 49558 / DSM 4304 / JCM 9628 / NBRC 100126 / VC-16).